A 275-amino-acid polypeptide reads, in one-letter code: Photosystem II extrinsic protein O (275 aa).

The N-terminal stretch at 1–28 (MRFRTLLIAFLALCLGLITACSEGPANA) is a signal peptide.

The protein belongs to the PsbO family. In terms of assembly, PSII is composed of 1 copy each of membrane proteins PsbA, PsbB, PsbC, PsbD, PsbE, PsbF, PsbH, PsbI, PsbJ, PsbK, PsbL, PsbM, PsbT, PsbX, PsbY, PsbZ, Psb30/Ycf12, peripheral proteins PsbO, CyanoQ (PsbQ), PsbU, PsbV and a large number of cofactors. It forms dimeric complexes.

The protein localises to the cellular thylakoid membrane. Functionally, one of the extrinsic, lumenal subunits of photosystem II (PSII), which stabilize and protect the oxygen-evolving complex. PSII is a light-driven water plastoquinone oxidoreductase, using light energy to abstract electrons from H(2)O, generating a proton gradient subsequently used for ATP formation. Required for dimerization of PSII and for binding of PsbQ to PSII. This chain is Photosystem II extrinsic protein O, found in Crocosphaera subtropica (strain ATCC 51142 / BH68) (Cyanothece sp. (strain ATCC 51142)).